The primary structure comprises 219 residues: Lipoprotein-releasing system ATP-binding protein LolD (219 aa).

The region spanning 3–219 (IEARNIRKSF…HMRDGLLFSE (217 aa)) is the ABC transporter domain. 35 to 42 (GTSGAGKT) is a binding site for ATP.

Belongs to the ABC transporter superfamily. Lipoprotein translocase (TC 3.A.1.125) family. As to quaternary structure, the complex is composed of two ATP-binding proteins (LolD) and two transmembrane proteins (LolC and LolE).

It is found in the cell inner membrane. Part of the ABC transporter complex LolCDE involved in the translocation of mature outer membrane-directed lipoproteins, from the inner membrane to the periplasmic chaperone, LolA. Responsible for the formation of the LolA-lipoprotein complex in an ATP-dependent manner. The sequence is that of Lipoprotein-releasing system ATP-binding protein LolD from Porphyromonas gingivalis (strain ATCC BAA-308 / W83).